The chain runs to 253 residues: Sulfate transporter CysZ (253 aa).

4 consecutive transmembrane segments (helical) span residues Phe31–Phe51, Leu75–Ile95, Ile151–Trp171, and Ile222–Val242.

The protein belongs to the CysZ family.

The protein localises to the cell inner membrane. Functionally, high affinity, high specificity proton-dependent sulfate transporter, which mediates sulfate uptake. Provides the sulfur source for the cysteine synthesis pathway. The protein is Sulfate transporter CysZ of Escherichia coli O139:H28 (strain E24377A / ETEC).